The primary structure comprises 154 residues: Myoglobin (154 aa).

A Globin domain is found at 2-148 (GLSDGEWQLV…FRKDIAAKYK (147 aa)). S4 bears the Phosphoserine mark. Residue H65 participates in nitrite binding. H65 provides a ligand contact to O2. Phosphothreonine is present on T68. Heme b is bound at residue H94.

This sequence belongs to the globin family. Monomeric.

Its subcellular location is the cytoplasm. It localises to the sarcoplasm. It catalyses the reaction Fe(III)-heme b-[protein] + nitric oxide + H2O = Fe(II)-heme b-[protein] + nitrite + 2 H(+). The enzyme catalyses H2O2 + AH2 = A + 2 H2O. Functionally, monomeric heme protein which primary function is to store oxygen and facilitate its diffusion within muscle tissues. Reversibly binds oxygen through a pentacoordinated heme iron and enables its timely and efficient release as needed during periods of heightened demand. Depending on the oxidative conditions of tissues and cells, and in addition to its ability to bind oxygen, it also has a nitrite reductase activity whereby it regulates the production of bioactive nitric oxide. Under stress conditions, like hypoxia and anoxia, it also protects cells against reactive oxygen species thanks to its pseudoperoxidase activity. This Delphinus delphis (Short-beaked common dolphin) protein is Myoglobin (MB).